The following is a 363-amino-acid chain: MINLFLYCRAGYEKDCAAEIQQRAAELNVGGFVKTNRNDGYVIFQCFQVGDADLLAEQIELDSLIFTRQMFAANELLKDLPEGDRVTPIVDALAKVHRAGELRVETPDTNEAKELSTFCRKLTVPLRQALKRSGALLEKENPKRPIIHVCFVGPGTAYVGYSLSHNSSPYFMGIPRLKMASDAPSRSTLKLDEAFIHFIPKSEQEQRLRSGMNSVDLGACPGGWTYQLVRRGMFVAAVDNGPMAQNLMDTGQVRHYQADGFRFEPPKKNIYWLVCDMVEKPSRVAELMEAWAINGWFKEAIFNLKLPMKSRYKEVSTILATMQEVLRENGIDDFHLACKHLYHDRDEVTVHLWLKPSVGFNFG.

Residues serine 187, 220-223 (CPGG), aspartate 239, aspartate 259, and aspartate 276 contribute to the S-adenosyl-L-methionine site. Lysine 305 serves as the catalytic Proton acceptor.

Belongs to the class I-like SAM-binding methyltransferase superfamily. RNA methyltransferase RlmE family. RlmM subfamily. As to quaternary structure, monomer.

It localises to the cytoplasm. The enzyme catalyses cytidine(2498) in 23S rRNA + S-adenosyl-L-methionine = 2'-O-methylcytidine(2498) in 23S rRNA + S-adenosyl-L-homocysteine + H(+). Catalyzes the 2'-O-methylation at nucleotide C2498 in 23S rRNA. In Shewanella loihica (strain ATCC BAA-1088 / PV-4), this protein is Ribosomal RNA large subunit methyltransferase M.